The chain runs to 99 residues: Small ribosomal subunit protein eS24 (99 aa).

It belongs to the eukaryotic ribosomal protein eS24 family.

In Thermoplasma volcanium (strain ATCC 51530 / DSM 4299 / JCM 9571 / NBRC 15438 / GSS1), this protein is Small ribosomal subunit protein eS24 (rps2e).